Consider the following 249-residue polypeptide: Proteasome activator complex subunit 1 (249 aa).

The segment at 60-102 (PLDIPVPDPVKEKEKEERKKQQEKEDKDEKKKGEDEDKGPPCG) is disordered. Basic and acidic residues predominate over residues 68-98 (PVKEKEKEERKKQQEKEDKDEKKKGEDEDKG).

This sequence belongs to the PA28 family. In terms of assembly, heterodimer of PSME1 and PSME2, which forms a hexameric ring. PSME1 can form homoheptamers.

Its function is as follows. Implicated in immunoproteasome assembly and required for efficient antigen processing. The PA28 activator complex enhances the generation of class I binding peptides by altering the cleavage pattern of the proteasome. In Sus scrofa (Pig), this protein is Proteasome activator complex subunit 1 (PSME1).